Reading from the N-terminus, the 351-residue chain is tRNA (guanine(10)-N2)-dimethyltransferase (351 aa).

The THUMP domain maps to E57 to L165.

This sequence belongs to the methyltransferase superfamily. Trm-G10 family. As to quaternary structure, monomer.

The protein localises to the cytoplasm. The enzyme catalyses guanosine(10) in tRNA + 2 S-adenosyl-L-methionine = N(2)-dimethylguanosine(10) in tRNA + 2 S-adenosyl-L-homocysteine + 2 H(+). Catalyzes the adenosylmethionine-dependent methylation of the exocyclic amino group (N(2)) of guanosine at position 10 of various tRNAs. Acts via a two-step process that leads to the formation of either N(2)-monomethyl (m(2)G) or N(2)-dimethylguanosine (m(2)(2)G). The polypeptide is tRNA (guanine(10)-N2)-dimethyltransferase (trmG10) (Methanocaldococcus jannaschii (strain ATCC 43067 / DSM 2661 / JAL-1 / JCM 10045 / NBRC 100440) (Methanococcus jannaschii)).